The chain runs to 379 residues: Inactive deoxyhypusine synthase (379 aa).

The segment at 1–48 (MLASVPAPRPAKKDSAASRRKSASKSTGAAVKDGSSARVSASGAAESP) is disordered. Residues 36–47 (SARVSASGAAES) show a composition bias toward low complexity. NAD(+) is bound by residues 115 to 119 (SNMIS), 141 to 143 (SAG), glutamate 147, and aspartate 256. 146 to 147 (EE) provides a ligand contact to spermidine. Aspartate 261 contributes to the spermidine binding site. Glycine 302 provides a ligand contact to NAD(+). Residue histidine 307 participates in spermidine binding. 323–324 (TG) contacts NAD(+). Spermidine-binding positions include 329 to 331 (GCV) and 338 to 344 (DDVACGL). 357–358 (DA) contacts NAD(+).

It belongs to the deoxyhypusine synthase family.

This chain is Inactive deoxyhypusine synthase, found in Leishmania donovani.